An 88-amino-acid polypeptide reads, in one-letter code: Small ribosomal subunit protein uS15 (88 aa).

It belongs to the universal ribosomal protein uS15 family. In terms of assembly, part of the 30S ribosomal subunit. Forms a bridge to the 50S subunit in the 70S ribosome, contacting the 23S rRNA.

One of the primary rRNA binding proteins, it binds directly to 16S rRNA where it helps nucleate assembly of the platform of the 30S subunit by binding and bridging several RNA helices of the 16S rRNA. Its function is as follows. Forms an intersubunit bridge (bridge B4) with the 23S rRNA of the 50S subunit in the ribosome. This is Small ribosomal subunit protein uS15 from Methylacidiphilum infernorum (isolate V4) (Methylokorus infernorum (strain V4)).